The chain runs to 124 residues: Fluoride-specific ion channel FluC 1 (124 aa).

A run of 4 helical transmembrane segments spans residues 1–21, 30–50, 64–84, and 93–113; these read MCAVSLTKPVAVVALGGALGA, LWPGIWTVLLINVVGSLLLGY, FLGVGVLGGFTTFSTFAVDAV, and LYVVATLIPALLAARLGMLAG. Na(+) is bound by residues Gly-71 and Thr-74.

The protein belongs to the fluoride channel Fluc/FEX (TC 1.A.43) family.

It is found in the cell membrane. It catalyses the reaction fluoride(in) = fluoride(out). Na(+) is not transported, but it plays an essential structural role and its presence is essential for fluoride channel function. In terms of biological role, fluoride-specific ion channel. Important for reducing fluoride concentration in the cell, thus reducing its toxicity. The protein is Fluoride-specific ion channel FluC 1 of Rhodococcus jostii (strain RHA1).